The chain runs to 132 residues: MAITKSKQQKTRKKVKRVVSDGIVHIHASFNNTIVTFTDRQGNALCWATSGGSGFRGSRKSTPYAAQVATERAAAVAKEYGMKSVAVFVHGPGPGRESTIRELITQDFKIVEITDVTGIPHNGCKPPKKRRV.

It belongs to the universal ribosomal protein uS11 family. As to quaternary structure, part of the 30S ribosomal subunit. Interacts with proteins S7 and S18. Binds to IF-3.

In terms of biological role, located on the platform of the 30S subunit, it bridges several disparate RNA helices of the 16S rRNA. Forms part of the Shine-Dalgarno cleft in the 70S ribosome. The protein is Small ribosomal subunit protein uS11 of Legionella pneumophila (strain Paris).